Reading from the N-terminus, the 409-residue chain is NADH-quinone oxidoreductase subunit D (409 aa).

Belongs to the complex I 49 kDa subunit family. As to quaternary structure, NDH-1 is composed of 14 different subunits. Subunits NuoB, C, D, E, F, and G constitute the peripheral sector of the complex.

It localises to the cell inner membrane. The catalysed reaction is a quinone + NADH + 5 H(+)(in) = a quinol + NAD(+) + 4 H(+)(out). Functionally, NDH-1 shuttles electrons from NADH, via FMN and iron-sulfur (Fe-S) centers, to quinones in the respiratory chain. The immediate electron acceptor for the enzyme in this species is believed to be ubiquinone. Couples the redox reaction to proton translocation (for every two electrons transferred, four hydrogen ions are translocated across the cytoplasmic membrane), and thus conserves the redox energy in a proton gradient. This Campylobacter concisus (strain 13826) protein is NADH-quinone oxidoreductase subunit D.